Here is a 315-residue protein sequence, read N- to C-terminus: Methionyl-tRNA formyltransferase (315 aa).

Residue 113-116 (SILP) participates in (6S)-5,6,7,8-tetrahydrofolate binding.

Belongs to the Fmt family.

The enzyme catalyses L-methionyl-tRNA(fMet) + (6R)-10-formyltetrahydrofolate = N-formyl-L-methionyl-tRNA(fMet) + (6S)-5,6,7,8-tetrahydrofolate + H(+). In terms of biological role, attaches a formyl group to the free amino group of methionyl-tRNA(fMet). The formyl group appears to play a dual role in the initiator identity of N-formylmethionyl-tRNA by promoting its recognition by IF2 and preventing the misappropriation of this tRNA by the elongation apparatus. The sequence is that of Methionyl-tRNA formyltransferase from Aliivibrio fischeri (strain ATCC 700601 / ES114) (Vibrio fischeri).